We begin with the raw amino-acid sequence, 264 residues long: Thymidylate synthase (264 aa).

Residue Arg21 participates in dUMP binding. His51 contacts (6R)-5,10-methylene-5,6,7,8-tetrahydrofolate. DUMP is bound at residue 126–127 (RR). Cys146 (nucleophile) is an active-site residue. DUMP is bound by residues 166–169 (RSAD), Asn177, and 207–209 (HLY). Asp169 contributes to the (6R)-5,10-methylene-5,6,7,8-tetrahydrofolate binding site. Ala263 serves as a coordination point for (6R)-5,10-methylene-5,6,7,8-tetrahydrofolate.

This sequence belongs to the thymidylate synthase family. Bacterial-type ThyA subfamily. In terms of assembly, homodimer.

It is found in the cytoplasm. The enzyme catalyses dUMP + (6R)-5,10-methylene-5,6,7,8-tetrahydrofolate = 7,8-dihydrofolate + dTMP. The protein operates within pyrimidine metabolism; dTTP biosynthesis. Its function is as follows. Catalyzes the reductive methylation of 2'-deoxyuridine-5'-monophosphate (dUMP) to 2'-deoxythymidine-5'-monophosphate (dTMP) while utilizing 5,10-methylenetetrahydrofolate (mTHF) as the methyl donor and reductant in the reaction, yielding dihydrofolate (DHF) as a by-product. This enzymatic reaction provides an intracellular de novo source of dTMP, an essential precursor for DNA biosynthesis. This is Thymidylate synthase from Thiobacillus denitrificans (strain ATCC 25259 / T1).